The chain runs to 330 residues: tRNA pseudouridine synthase B (330 aa).

The Nucleophile role is filled by aspartate 42.

It belongs to the pseudouridine synthase TruB family. Type 1 subfamily.

The enzyme catalyses uridine(55) in tRNA = pseudouridine(55) in tRNA. Its function is as follows. Responsible for synthesis of pseudouridine from uracil-55 in the psi GC loop of transfer RNAs. This Lactococcus lactis subsp. cremoris (strain MG1363) protein is tRNA pseudouridine synthase B.